The primary structure comprises 582 residues: ABC transporter-like protein ECU11_1340 (582 aa).

The region spanning 15-257 is the ABC transporter domain; sequence VPNQNLSSNE…LGTKGIHNDG (243 aa). ATP is bound at residue 47 to 54; that stretch reads GTSGSGKT. Residues 316-519 form the ABC transmembrane type-2 domain; it reads YVSFQMAIRQ…EIDAFISNFF (204 aa). The next 6 helical transmembrane spans lie at 335 to 355, 359 to 378, 412 to 432, 436 to 456, 482 to 502, and 551 to 571; these read ILYS…GKYI, FSIA…YVMN, TLVS…FGLI, HAFL…SMLF, GALL…SVIP, and SFLR…SSIL.

This sequence belongs to the ABC transporter superfamily.

It is found in the membrane. The protein is ABC transporter-like protein ECU11_1340 of Encephalitozoon cuniculi (strain GB-M1) (Microsporidian parasite).